Here is a 393-residue protein sequence, read N- to C-terminus: NAD(P)H-quinone oxidoreductase subunit H, chloroplastic (393 aa).

Belongs to the complex I 49 kDa subunit family. NDH is composed of at least 16 different subunits, 5 of which are encoded in the nucleus.

It is found in the plastid. It localises to the chloroplast thylakoid membrane. It catalyses the reaction a plastoquinone + NADH + (n+1) H(+)(in) = a plastoquinol + NAD(+) + n H(+)(out). It carries out the reaction a plastoquinone + NADPH + (n+1) H(+)(in) = a plastoquinol + NADP(+) + n H(+)(out). Functionally, NDH shuttles electrons from NAD(P)H:plastoquinone, via FMN and iron-sulfur (Fe-S) centers, to quinones in the photosynthetic chain and possibly in a chloroplast respiratory chain. The immediate electron acceptor for the enzyme in this species is believed to be plastoquinone. Couples the redox reaction to proton translocation, and thus conserves the redox energy in a proton gradient. This is NAD(P)H-quinone oxidoreductase subunit H, chloroplastic from Spinacia oleracea (Spinach).